The sequence spans 1006 residues: Cytosolic carboxypeptidase 3 (1006 aa).

The Peptidase M14 domain maps to 304–576 (YPYTYSNLQE…HFCDSLLDYC (273 aa)). The Zn(2+) site is built by H368, E371, and H464. E540 acts as the Proton donor/acceptor in catalysis. Residues 790-810 (ESHHQLKSKAKRCSSFQSKRT) form a disordered region.

The protein belongs to the peptidase M14 family. The cofactor is Zn(2+). Widely expressed. Expressed abundantly in tissues with m otile cilia such as testis, lung and trachea. Abundantly expressed in pituitary and kidney, moderately expressed in brain, eye, fat, pancreas, stomach, and adrenal.

The protein localises to the cytoplasm. It is found in the cytosol. It catalyses the reaction (L-glutamyl)(n+1)-gamma-L-glutamyl-L-glutamyl-[protein] + H2O = (L-glutamyl)(n)-gamma-L-glutamyl-L-glutamyl-[protein] + L-glutamate. Functionally, metallocarboxypeptidase that mediates deglutamylation of tubulin and non-tubulin target proteins. Catalyzes the removal of polyglutamate side chains present on the gamma-carboxyl group of glutamate residues within the C-terminal tail of tubulin protein. Specifically cleaves tubulin long-side-chains, while it is not able to remove the branching point glutamate. Also catalyzes the removal of polyglutamate residues from the carboxy-terminus of non-tubulin proteins such as MYLK. May catalyze the hydrolysis of aspartate from the carboxy-terminus of target proteins. Does not show detyrosinase or deglycylase activities from the carboxy-terminus of target proteins. This Mus musculus (Mouse) protein is Cytosolic carboxypeptidase 3.